A 986-amino-acid polypeptide reads, in one-letter code: Bone morphogenetic protein 1 (986 aa).

A signal peptide spans 1-22; sequence MPGVARLPLLLGLLLLPRPGRP. A propeptide spanning residues 23 to 120 is cleaved from the precursor; sequence LDLADYTYDL…RWRGRSRSRR (98 aa). Residues 83–125 form a disordered region; that stretch reads SIKAAVPGNTSTPSCQSTNGQPQRGACGRWRGRSRSRRAATSR. The span at 90–104 shows a compositional bias: polar residues; it reads GNTSTPSCQSTNGQP. N-linked (GlcNAc...) asparagine glycosylation occurs at Asn91. Basic residues predominate over residues 112 to 122; the sequence is WRGRSRSRRAA. One can recognise a Peptidase M12A domain in the interval 121–320; the sequence is AATSRPERVW…AQARKLYKCP (200 aa). The N-linked (GlcNAc...) asparagine glycan is linked to Asn142. Disulfide bonds link Cys163/Cys319, Cys183/Cys205, Cys185/Cys186, and Cys322/Cys348. His213 provides a ligand contact to Zn(2+). Residue Glu214 is part of the active site. The Zn(2+) site is built by His217 and His223. 2 consecutive CUB domains span residues 322 to 434 and 435 to 546; these read CGET…YEAI and CGGD…NFFK. N-linked (GlcNAc...) asparagine glycans are attached at residues Asn332 and Asn363. Cystine bridges form between Cys375-Cys397, Cys435-Cys461, Cys488-Cys510, Cys551-Cys563, Cys559-Cys572, Cys574-Cys587, Cys591-Cys617, Cys644-Cys666, Cys707-Cys718, Cys714-Cys727, Cys729-Cys742, Cys747-Cys773, Cys800-Cys822, Cys860-Cys890, and Cys917-Cys939. One can recognise an EGF-like 1; calcium-binding domain in the interval 547–588; sequence EVDECSRPNRGGCEQRCLNTLGSYKCSCDPGYELAPDKRRCE. The CUB 3 domain occupies 591–703; sequence CGGFLTKLNG…KGFKAHFFSD (113 aa). Asn599 carries N-linked (GlcNAc...) asparagine glycosylation. The 40-residue stretch at 704–743 folds into the EGF-like 2; calcium-binding domain; the sequence is KDECSKDNGGCQQDCVNTFGSYECQCRSGFVLHDNKHDCK. CUB domains follow at residues 747–859 and 860–976; these read CDHK…HATE and CGGQ…YTST. Omega-N-methylarginine occurs at positions 934 and 937.

As to quaternary structure, interacts with POSTN, the interaction promotes deposition on the extracellular matrix. It depends on Zn(2+) as a cofactor. In terms of processing, proteolytically activated in the trans-Golgi network by furin-like/paired basic proprotein convertases, cleavage is not required for secretion. As to expression, ubiquitous.

It localises to the golgi apparatus. The protein localises to the trans-Golgi network. It is found in the secreted. Its subcellular location is the extracellular space. The protein resides in the extracellular matrix. The catalysed reaction is Cleavage of the C-terminal propeptide at Ala-|-Asp in type I and II procollagens and at Arg-|-Asp in type III.. With respect to regulation, activity is increased by the procollagen C-endopeptidase enhancer protein. Its function is as follows. Metalloprotease that plays key roles in regulating the formation of the extracellular matrix (ECM) via processing of various precursor proteins into mature functional enzymes or structural proteins. Thereby participates in several developmental and physiological processes such as cartilage and bone formation, muscle growth and homeostasis, wound healing and tissue repair. Roles in ECM formation include cleavage of the C-terminal propeptides from procollagens such as procollagen I, II and III or the proteolytic activation of the enzyme lysyl oxidase LOX, necessary to formation of covalent cross-links in collagen and elastic fibers. Additional substrates include matricellular thrombospondin-1/THBS1 whose cleavage leads to cell adhesion disruption and TGF-beta activation. In terms of biological role, plays an important role in bone repair by acting as a coactivator of BMP7. The chain is Bone morphogenetic protein 1 (BMP1) from Homo sapiens (Human).